The chain runs to 329 residues: Ribose-phosphate pyrophosphokinase B (329 aa).

Residues Asp131, His133, and Glu146 each coordinate Mg(2+). The segment at 227–242 (TGKIAIIIDDIADTCK) is binding of phosphoribosylpyrophosphate.

It belongs to the ribose-phosphate pyrophosphokinase family. It depends on Mg(2+) as a cofactor.

It is found in the cytoplasm. The catalysed reaction is D-ribose 5-phosphate + ATP = 5-phospho-alpha-D-ribose 1-diphosphate + AMP + H(+). The protein operates within metabolic intermediate biosynthesis; 5-phospho-alpha-D-ribose 1-diphosphate biosynthesis; 5-phospho-alpha-D-ribose 1-diphosphate from D-ribose 5-phosphate (route I): step 1/1. The polypeptide is Ribose-phosphate pyrophosphokinase B (prsB) (Dictyostelium discoideum (Social amoeba)).